Consider the following 148-residue polypeptide: uncharacterized protein (148 aa).

The next 4 membrane-spanning stretches (helical) occupy residues 29-49 (FSLVIVTLMMSIVVVLAAAKE), 61-81 (PIILMISIGIVVFLLIPPLVM), 99-119 (FIVFTFLGLIPIGFLIPNGFL), and 121-141 (ILVSIAGTLVSIASVAVTLCI).

It is found in the cell membrane. This is an uncharacterized protein from Bacillus subtilis (strain 168).